The following is a 292-amino-acid chain: Probable 2-(5''-triphosphoribosyl)-3'-dephosphocoenzyme-A synthase (292 aa).

The protein belongs to the CitG/MdcB family.

It carries out the reaction 3'-dephospho-CoA + ATP = 2'-(5''-triphospho-alpha-D-ribosyl)-3'-dephospho-CoA + adenine. The sequence is that of Probable 2-(5''-triphosphoribosyl)-3'-dephosphocoenzyme-A synthase from Shigella flexneri.